A 510-amino-acid polypeptide reads, in one-letter code: NAD(P)H-quinone oxidoreductase subunit 2 A, chloroplastic (510 aa).

14 helical membrane-spanning segments follow: residues 31 to 51, 59 to 79, 99 to 119, 124 to 144, 149 to 169, 184 to 204, 229 to 249, 261 to 281, 295 to 315, 323 to 343, 354 to 374, 395 to 415, 418 to 438, and 484 to 504; these read FIFP…IDLT, WFYF…LFRW, IFQF…VEYI, MAIT…MFLC, LITI…LSGY, LLMG…LYGL, ISIA…LAPF, PTPV…ALAT, WHLL…LLAI, MLAY…IVGD, YMLF…LFGL, ALSL…AGFF, LYLF…IGLL, and MTVC…ILAI.

Belongs to the complex I subunit 2 family. NDH is composed of at least 16 different subunits, 5 of which are encoded in the nucleus.

It localises to the plastid. Its subcellular location is the chloroplast thylakoid membrane. It carries out the reaction a plastoquinone + NADH + (n+1) H(+)(in) = a plastoquinol + NAD(+) + n H(+)(out). It catalyses the reaction a plastoquinone + NADPH + (n+1) H(+)(in) = a plastoquinol + NADP(+) + n H(+)(out). Functionally, NDH shuttles electrons from NAD(P)H:plastoquinone, via FMN and iron-sulfur (Fe-S) centers, to quinones in the photosynthetic chain and possibly in a chloroplast respiratory chain. The immediate electron acceptor for the enzyme in this species is believed to be plastoquinone. Couples the redox reaction to proton translocation, and thus conserves the redox energy in a proton gradient. The polypeptide is NAD(P)H-quinone oxidoreductase subunit 2 A, chloroplastic (Oryza sativa subsp. japonica (Rice)).